The sequence spans 502 residues: Probable glycine dehydrogenase (decarboxylating) subunit 2 (502 aa).

The residue at position 273 (K273) is an N6-(pyridoxal phosphate)lysine.

Belongs to the GcvP family. C-terminal subunit subfamily. In terms of assembly, the glycine cleavage system is composed of four proteins: P, T, L and H. In this organism, the P 'protein' is a heterodimer of two subunits. Pyridoxal 5'-phosphate serves as cofactor.

The enzyme catalyses N(6)-[(R)-lipoyl]-L-lysyl-[glycine-cleavage complex H protein] + glycine + H(+) = N(6)-[(R)-S(8)-aminomethyldihydrolipoyl]-L-lysyl-[glycine-cleavage complex H protein] + CO2. In terms of biological role, the glycine cleavage system catalyzes the degradation of glycine. The P protein binds the alpha-amino group of glycine through its pyridoxal phosphate cofactor; CO(2) is released and the remaining methylamine moiety is then transferred to the lipoamide cofactor of the H protein. In Thermococcus gammatolerans (strain DSM 15229 / JCM 11827 / EJ3), this protein is Probable glycine dehydrogenase (decarboxylating) subunit 2.